Consider the following 100-residue polypeptide: Urease subunit gamma (100 aa).

Belongs to the urease gamma subunit family. As to quaternary structure, heterotrimer of UreA (gamma), UreB (beta) and UreC (alpha) subunits. Three heterotrimers associate to form the active enzyme.

It is found in the cytoplasm. The enzyme catalyses urea + 2 H2O + H(+) = hydrogencarbonate + 2 NH4(+). It functions in the pathway nitrogen metabolism; urea degradation; CO(2) and NH(3) from urea (urease route): step 1/1. The chain is Urease subunit gamma from Shewanella halifaxensis (strain HAW-EB4).